A 251-amino-acid polypeptide reads, in one-letter code: uncharacterized protein (251 aa).

The first 15 residues, 1-15 (MSAISSLVLIGWAMC), serve as a signal peptide directing secretion. N-linked (GlcNAc...) asparagine glycans are attached at residues N225 and N242.

This is an uncharacterized protein from Encephalitozoon cuniculi (strain GB-M1) (Microsporidian parasite).